The primary structure comprises 212 residues: Ribonuclease HII (212 aa).

Residues 19-212 form the RNase H type-2 domain; that stretch reads CIIVGVDEVG…SKISYMFKNS (194 aa). 3 residues coordinate a divalent metal cation: D25, E26, and D120.

It belongs to the RNase HII family. Mn(2+) serves as cofactor. It depends on Mg(2+) as a cofactor.

The protein localises to the cytoplasm. The catalysed reaction is Endonucleolytic cleavage to 5'-phosphomonoester.. Endonuclease that specifically degrades the RNA of RNA-DNA hybrids. The protein is Ribonuclease HII of Ehrlichia ruminantium (strain Welgevonden).